The primary structure comprises 664 residues: ATP-dependent zinc metalloprotease FtsH (664 aa).

The Cytoplasmic portion of the chain corresponds to 1–9 (MKQNIKRNW). Residues 10–30 (IWILIVMIVIGIILYFSIRNL) traverse the membrane as a helical segment. Over 31–136 (FSTKVAEWSI…KSVATPQPNP (106 aa)) the chain is Extracellular. A helical membrane pass occupies residues 137 to 157 (FLGILISSVPVLILIFVMVWI). Residues 158–664 (YRSQVKMMNG…SLIEKTSKKE (507 aa)) are Cytoplasmic-facing. 229-236 (GPPGTGKT) serves as a coordination point for ATP. A Zn(2+)-binding site is contributed by His-451. Glu-452 is a catalytic residue. Positions 455 and 529 each coordinate Zn(2+). The segment covering 639–649 (IEEKDLSKNSE) has biased composition (basic and acidic residues). The segment at 639 to 664 (IEEKDLSKNSEDNNLDSLIEKTSKKE) is disordered.

This sequence in the central section; belongs to the AAA ATPase family. The protein in the C-terminal section; belongs to the peptidase M41 family. In terms of assembly, homohexamer. The cofactor is Zn(2+).

The protein localises to the cell membrane. Functionally, acts as a processive, ATP-dependent zinc metallopeptidase for both cytoplasmic and membrane proteins. Plays a role in the quality control of integral membrane proteins. This Mycoplasmopsis synoviae (strain 53) (Mycoplasma synoviae) protein is ATP-dependent zinc metalloprotease FtsH.